The chain runs to 175 residues: MEKLTDLNYTSSVITLMNSTLHTILEDPGMAYFPYIASVLTVLFTLHKASIPTMKIALKTSKCSYKVVKYCIVTIFNTLLKLAGYKEQITTKDEIEKQMDRVVKEMRRQLEMIDKLTTREIEQVELLKRIHDKLMIRAVDEIDMTKEINQKNVRTLEEWENGKNPYEPKEVTAAM.

Over 1–28 the chain is Lumenal; sequence MEKLTDLNYTSSVITLMNSTLHTILEDP. The segment at 7 to 21 is hydrophobic; it reads LNYTSSVITLMNSTL. N-linked (GlcNAc...) asparagine; by host glycans are attached at residues Asn-8 and Asn-18. Residues 29 to 51 traverse the membrane as a helical; Signal-anchor for type III membrane protein segment; the sequence is GMAYFPYIASVLTVLFTLHKASI. Topologically, residues 52-175 are cytoplasmic; the sequence is PTMKIALKTS…YEPKEVTAAM (124 aa). The interval 67-85 is hydrophobic; sequence VVKYCIVTIFNTLLKLAGY. Ca(2+) contacts are provided by Glu-120 and Gln-123.

Belongs to the rotavirus NSP4 family. As to quaternary structure, homotetramer. Interacts with the immature particle in the viroplasm. Interacts with host CAV1, early and late in infection. Interacts with host integrin ITGA1/ITGB1 heterodimer. Interacts with host integrin ITGA2/ITGB1 heterodimer. Interaction with microtubules blocks trafficking to the Golgi apparatus. In terms of processing, mannosylated. Post-translationally, the N-glycosyl content is primarily Man(9)GlcNAc, with a small amount of Man(8)GlcNAc.

The protein localises to the host rough endoplasmic reticulum membrane. Its subcellular location is the host membrane. The protein resides in the host caveola. It localises to the secreted. In terms of biological role, plays an essential role in the virus replication cycle by acting as a viroporin. Creates a pore in the host endoplasmic reticulum and as a consequence releases Ca(2+) in the cytoplasm of infected cell. In turn, high levels of cytoplasmic calcium trigger membrane trafficking and transport of viral ER-associated proteins to viroplasms, sites of viral genome replication and immature particle assembly. Functionally, the secreted form acts as an enterotoxin that causes phospholipase C-dependent elevation of the intracellular calcium concentration in host intestinal mucosa cells. Increased concentration of intracellular calcium disrupts the cytoskeleton and the tight junctions, raising the paracellular permeability. Potentiates chloride ion secretion through a calcium ion-dependent signaling pathway, inducing age-dependent diarrhea. To perform this enterotoxigenic role in vivo, NSP4 is released from infected enterocytes in a soluble form capable of diffusing within the intestinal lumen and interacting with host plasma membrane receptors on neighboring epithelial cells such as integrins ITGA1/ITGB1 and ITGA2/ITGB1. The protein is Non-structural glycoprotein 4 of Rotavirus A (strain RVA/Cow/United States/NCDV-Lincoln/1969/G6P6[1]) (RV-A).